Consider the following 556-residue polypeptide: Formate--tetrahydrofolate ligase (556 aa).

An ATP-binding site is contributed by 65 to 72 (TPAGEGKT).

The protein belongs to the formate--tetrahydrofolate ligase family.

The catalysed reaction is (6S)-5,6,7,8-tetrahydrofolate + formate + ATP = (6R)-10-formyltetrahydrofolate + ADP + phosphate. It functions in the pathway one-carbon metabolism; tetrahydrofolate interconversion. This is Formate--tetrahydrofolate ligase from Clostridium cylindrosporum.